The following is an 835-amino-acid chain: Leucine--tRNA ligase (835 aa).

Positions 36–46 (PYPSGKIHVGH) match the 'HIGH' region motif. Positions 602–606 (KMSKS) match the 'KMSKS' region motif. Lys605 serves as a coordination point for ATP.

It belongs to the class-I aminoacyl-tRNA synthetase family.

Its subcellular location is the cytoplasm. It carries out the reaction tRNA(Leu) + L-leucine + ATP = L-leucyl-tRNA(Leu) + AMP + diphosphate. The chain is Leucine--tRNA ligase from Rickettsia africae (strain ESF-5).